The chain runs to 380 residues: Large ribosomal subunit protein mL38 (380 aa).

The transit peptide at 1-26 (MAAPWWRVVLNGSRNWRGFSTSAALS) directs the protein to the mitochondrion. Residues 101–122 (QQLLERKRVLRELRTSVEEERA) adopt a coiled-coil conformation.

This sequence belongs to the phosphatidylethanolamine-binding protein family. Mitochondrion-specific ribosomal protein mL38 subfamily. As to quaternary structure, component of the mitochondrial ribosome large subunit (39S) which comprises a 16S rRNA and about 50 distinct proteins.

It localises to the mitochondrion. In Bos taurus (Bovine), this protein is Large ribosomal subunit protein mL38 (MRPL38).